A 184-amino-acid chain; its full sequence is Large ribosomal subunit protein uL6 (184 aa).

Belongs to the universal ribosomal protein uL6 family. Part of the 50S ribosomal subunit.

Its function is as follows. This protein binds to the 23S rRNA, and is important in its secondary structure. It is located near the subunit interface in the base of the L7/L12 stalk, and near the tRNA binding site of the peptidyltransferase center. The sequence is that of Large ribosomal subunit protein uL6 from Pyrococcus abyssi (strain GE5 / Orsay).